Here is a 135-residue protein sequence, read N- to C-terminus: Transcriptional activator protein (135 aa).

Positions 17–32 (KIQHHIAKKRQVRRRR) match the Nuclear localization signal motif. Residues 37–54 (CGCSYYIHLDCINHGFTH) fold into a zinc finger. The transactivation stretch occupies residues 120–135 (HLDDLTVSDWSFFKSL).

This sequence belongs to the geminiviridae transcriptional activator protein family. As to quaternary structure, monomer. Homodimer. Homooligomer. Self-interaction correlates with nuclear localization and efficient activation of transcription. Monomers suppress local silencing by interacting with and inactivating host adenosine kinase 2 (ADK2) in the cytoplasm. Interacts with and inhibits host SNF1 kinase. Binds to ssDNA. May interact with host RPS27A. Post-translationally, phosphorylated.

The protein resides in the host nucleus. The protein localises to the host cytoplasm. Its function is as follows. Multifunctional protein that modulates host antiviral defenses and promotes host attractiveness to insect vectors. Acts as a suppressor of RNA-mediated gene silencing, also known as post-transcriptional gene silencing (PTGS), a mechanism of plant viral defense that limits the accumulation of viral RNAs. TrAP suppresses the host RNA silencing by inhibiting adenosine kinase 2 (ADK2), a kinase involved in a general methylation pathway. Also suppresses the host basal defense by interacting with and inhibiting SNF1 kinase, a key regulator of cell metabolism implicated in innate antiviral defense. In terms of biological role, inhibits signal transduction by the phytohormone jasmonate, making the infected plant more attractive to aphids, which are the second host to play a role as a dissemination vector. Acts by binding to ubiquitin precursor RPS27A, thereby preventing ubiquitin degradation of JAZ. The protein is Transcriptional activator protein of Capsicum annuum (Capsicum pepper).